The chain runs to 132 residues: Spermatogenesis-associated protein 33 (132 aa).

The interaction with ATG16L1 stretch occupies residues 1 to 60 (MGQSKSKPREKKEEEKSTTTLVTKSKEKVMEKEAKQSDKESQPAESLLFATSKHSRPSSS). Positions 1–81 (MGQSKSKPRE…SKKRSVIPQI (81 aa)) are disordered. Residues 24-42 (KSKEKVMEKEAKQSDKESQ) are compositionally biased toward basic and acidic residues. The interval 61–132 (SEDKPETKQR…IAAYDVHNTE (72 aa)) is interaction with VDAC2. The PQIIIT signature appears at 79 to 84 (PQIIIT). Serine 87 bears the Phosphoserine mark. The disordered stretch occupies residues 110–132 (DWGPYHRHRSPSTIAAYDVHNTE).

Interacts (via PQIIIT motif) with PPP3R2 and PPP3CC. Interacts with VDAC2. Interacts with ATG16L1 (via WD repeats). Interacts with PPP3R1, PPP3CA and PPP3CB. In terms of tissue distribution, predominantly expressed in the testis (at protein level). Expressed in the sperm midpiece (at protein level).

Its subcellular location is the cytoplasm. It localises to the cytosol. The protein localises to the nucleus. It is found in the mitochondrion. Its function is as follows. Plays an important role in sperm motility and male fertility. Required for sperm midpiece flexibility and for the localization of sperm calcineurin to the mitochondria. Promotes mitophagy as well as acts as an autophagy mediator in male germline cells. Links damaged mitochondria to autophagosomes via its binding to the outer mitochondrial membrane protein VDAC2, as well as to key autophagy machinery component ATG16L1. The chain is Spermatogenesis-associated protein 33 (Spata33) from Mus musculus (Mouse).